A 101-amino-acid polypeptide reads, in one-letter code: Ubiquitin-related modifier 1 homolog (101 aa).

A 1-thioglycine modification is found at G101. G101 participates in a covalent cross-link: Glycyl lysine isopeptide (Gly-Lys) (interchain with K-? in acceptor proteins).

The protein belongs to the URM1 family. As to quaternary structure, interacts with cer. Post-translationally, C-terminal thiocarboxylation occurs in 2 steps, it is first acyl-adenylated (-COAMP) via the hesA/moeB/thiF part of the MOCS3 homolog, then thiocarboxylated (-COSH) via the rhodanese domain of the MOCS3 homolog.

It is found in the cytoplasm. It functions in the pathway tRNA modification; 5-methoxycarbonylmethyl-2-thiouridine-tRNA biosynthesis. Its function is as follows. Acts as a sulfur carrier required for 2-thiolation of mcm(5)S(2)U at tRNA wobble positions of cytosolic tRNA(Lys), tRNA(Glu) and tRNA(Gln). Serves as sulfur donor in tRNA 2-thiolation reaction by being thiocarboxylated (-COSH) at its C-terminus by MOCS3. The sulfur is then transferred to tRNA to form 2-thiolation of mcm(5)S(2)U. Also acts as a ubiquitin-like protein (UBL) that is covalently conjugated via an isopeptide bond to lysine residues of target proteins such as Prx2/Jafrac1, Ciao1, Eip71CD and GILT1. The thiocarboxylated form serves as substrate for conjugation and oxidative stress specifically induces the formation of UBL-protein conjugates. The sequence is that of Ubiquitin-related modifier 1 homolog from Drosophila erecta (Fruit fly).